The chain runs to 360 residues: DNA replication and repair protein RecF (360 aa).

33-40 (GENGSGKT) serves as a coordination point for ATP.

It belongs to the RecF family.

It is found in the cytoplasm. Functionally, the RecF protein is involved in DNA metabolism; it is required for DNA replication and normal SOS inducibility. RecF binds preferentially to single-stranded, linear DNA. It also seems to bind ATP. The polypeptide is DNA replication and repair protein RecF (Rickettsia conorii (strain ATCC VR-613 / Malish 7)).